We begin with the raw amino-acid sequence, 450 residues long: Benzene 1,2-dioxygenase subunit alpha (450 aa).

Positions 56-163 constitute a Rieske domain; sequence LLGHETHIRK…VETYKGLIFA (108 aa). The [2Fe-2S] cluster site is built by C96, H98, C116, and H119. Residues H222 and H228 each contribute to the Fe cation site.

It belongs to the bacterial ring-hydroxylating dioxygenase alpha subunit family. This dioxygenase system consists of four proteins: the two subunits of the hydroxylase component (BedC1 and BedC2), a ferredoxin (BedB) and a ferredoxin reductase (BedA). The cofactor is [2Fe-2S] cluster. Fe cation is required as a cofactor.

It carries out the reaction benzene + NADH + O2 + H(+) = cis-1,2-dihydrobenzene-1,2-diol + NAD(+). It functions in the pathway aromatic compound metabolism; benzene degradation; catechol from benzene: step 1/2. This Pseudomonas putida (Arthrobacter siderocapsulatus) protein is Benzene 1,2-dioxygenase subunit alpha (bedC1).